Reading from the N-terminus, the 386-residue chain is Methylthioribose-1-phosphate isomerase (386 aa).

The Proton donor role is filled by Asp-258.

This sequence belongs to the eIF-2B alpha/beta/delta subunits family. MtnA subfamily.

It is found in the cytoplasm. Its subcellular location is the nucleus. The catalysed reaction is 5-(methylsulfanyl)-alpha-D-ribose 1-phosphate = 5-(methylsulfanyl)-D-ribulose 1-phosphate. The protein operates within amino-acid biosynthesis; L-methionine biosynthesis via salvage pathway; L-methionine from S-methyl-5-thio-alpha-D-ribose 1-phosphate: step 1/6. Its function is as follows. Catalyzes the interconversion of methylthioribose-1-phosphate (MTR-1-P) into methylthioribulose-1-phosphate (MTRu-1-P). The polypeptide is Methylthioribose-1-phosphate isomerase (Uncinocarpus reesii (strain UAMH 1704)).